Consider the following 141-residue polypeptide: Hemoglobin subunit alpha (141 aa).

The Globin domain occupies 1 to 141 (VLSGTDKTNV…VGLVLTAKYR (141 aa)). An O2-binding site is contributed by His-58. His-87 provides a ligand contact to heme b.

The protein belongs to the globin family. As to quaternary structure, heterotetramer of two alpha chains and two beta chains. In terms of tissue distribution, red blood cells.

Involved in oxygen transport from the lung to the various peripheral tissues. The sequence is that of Hemoglobin subunit alpha (HBA) from Psittacula krameri (Rose-ringed parakeet).